Here is a 247-residue protein sequence, read N- to C-terminus: Mannose-specific lectin CML-2 (247 aa).

Positions 87 and 107 each coordinate a carbohydrate. Asparagine 119 is a glycosylation site (N-linked (GlcNAc...) asparagine). Mn(2+) contacts are provided by glutamate 129 and aspartate 131. Residues aspartate 131 and phenylalanine 133 each contribute to the Ca(2+) site. A carbohydrate contacts are provided by serine 138 and asparagine 139. Asparagine 139 and aspartate 142 together coordinate Ca(2+). Positions 142 and 147 each coordinate Mn(2+). Residues glycine 221, glutamate 222, and glutamine 223 each coordinate a carbohydrate.

Belongs to the leguminous lectin family. In terms of assembly, homodimer; non-covalently linked. Post-translationally, glycosylated.

Its function is as follows. Mannose-specific lectin. Also binds alpha-methyl-D-mannoside, D-glucose, N-acetyl-D-glucosamine and sucrose but not D-galactose, D-arabinose, D-fructose, D-xylose, lactose or glycoproteins fetiun, PSM and ovalbumin. Shows agglutinating activity towards rabbit erythrocytes. The chain is Mannose-specific lectin CML-2 from Centrolobium microchaete (Canarywood tree).